The following is a 473-amino-acid chain: Ribulose bisphosphate carboxylase large chain (473 aa).

An N6,N6,N6-trimethyllysine modification is found at Lys8. Substrate is bound by residues Asn117 and Thr167. Residue Lys169 is the Proton acceptor of the active site. Lys171 lines the substrate pocket. Residues Lys195, Asp197, and Glu198 each contribute to the Mg(2+) site. Lys195 is subject to N6-carboxylysine. Catalysis depends on His288, which acts as the Proton acceptor. Residues Arg289, His321, and Ser373 each coordinate substrate.

This sequence belongs to the RuBisCO large chain family. Type I subfamily. In terms of assembly, heterohexadecamer of 8 large chains and 8 small chains; disulfide-linked. The disulfide link is formed within the large subunit homodimers. It depends on Mg(2+) as a cofactor. Post-translationally, the disulfide bond which can form in the large chain dimeric partners within the hexadecamer appears to be associated with oxidative stress and protein turnover.

The protein resides in the plastid. Its subcellular location is the chloroplast. It catalyses the reaction 2 (2R)-3-phosphoglycerate + 2 H(+) = D-ribulose 1,5-bisphosphate + CO2 + H2O. The catalysed reaction is D-ribulose 1,5-bisphosphate + O2 = 2-phosphoglycolate + (2R)-3-phosphoglycerate + 2 H(+). In terms of biological role, ruBisCO catalyzes two reactions: the carboxylation of D-ribulose 1,5-bisphosphate, the primary event in carbon dioxide fixation, as well as the oxidative fragmentation of the pentose substrate in the photorespiration process. Both reactions occur simultaneously and in competition at the same active site. The polypeptide is Ribulose bisphosphate carboxylase large chain (Amorphophallus titanum (Titan arum)).